An 83-amino-acid polypeptide reads, in one-letter code: Greglin (83 aa).

Phosphoserine occurs at positions 8, 11, and 15. Cystine bridges form between cysteine 21–cysteine 55, cysteine 25–cysteine 48, cysteine 33–cysteine 69, and cysteine 53–cysteine 76.

Its function is as follows. Serine protease inhibitor. Inhibits porcine pancreatic elastase with a Ki of 58.3 nM, human neutrophil elastase with a Ki of 3.6 nM, cathepsin G with a Ki of 153.5 nM, chymotrypsin with a Ki of 26.7 nM and subtilisin with a Ki of 0.68 nM. Does not inhibit neutrophil protease 3 or pancreatic trypsin. The chain is Greglin from Schistocerca gregaria (Desert locust).